The primary structure comprises 390 residues: MTLQSRWEAVMMNNYGTPPLSLVSGEGAVVTDADGREYLDLLGGIAVNLLGHRHPAVIEAVTTQLDTLGHTSNLYATEPGIALAEALVGQLGTQARVFFCNSGTEANEVAFKITRLTGKTKIVAAEGAFHGRTMGSLALTGQPSKQAPFEPLPGNVMHVPYGDVAALEAAVDDQTAAVFLEPIMGEGGVVVPPAGYLVAAREITSKHGALLVLDEVQTGVGRTGAFFAHQHDGIVPDVVTMAKGLGGGLPIGACLAVGATGDLLTPGLHGSTFGGNPVCTAAGLAVLKTLAAEDLVARAGVLGKTLSHGIEELGHPLVDKVRGKGLLQGIVLTVPSAKAVETAARDAGFLVNAAAPEVVRLAPPLIITEGQIEAFITALPAVLDTAAEDS.

Residues 103 to 104 and Phe129 each bind pyridoxal 5'-phosphate; that span reads GT. Arg132 contributes to the N(2)-acetyl-L-ornithine binding site. Pyridoxal 5'-phosphate is bound at residue 214–217; the sequence is DEVQ. Lys243 is subject to N6-(pyridoxal phosphate)lysine. Ser271 serves as a coordination point for N(2)-acetyl-L-ornithine. Thr272 serves as a coordination point for pyridoxal 5'-phosphate. Lys304 is covalently cross-linked (Isoglutamyl lysine isopeptide (Lys-Gln) (interchain with Q-Cter in protein Pup)).

Belongs to the class-III pyridoxal-phosphate-dependent aminotransferase family. ArgD subfamily. In terms of assembly, homodimer. The cofactor is pyridoxal 5'-phosphate.

Its subcellular location is the cytoplasm. The catalysed reaction is N(2)-acetyl-L-ornithine + 2-oxoglutarate = N-acetyl-L-glutamate 5-semialdehyde + L-glutamate. It functions in the pathway amino-acid biosynthesis; L-arginine biosynthesis; N(2)-acetyl-L-ornithine from L-glutamate: step 4/4. The sequence is that of Acetylornithine aminotransferase from Mycolicibacterium smegmatis (strain ATCC 700084 / mc(2)155) (Mycobacterium smegmatis).